A 265-amino-acid chain; its full sequence is Hydroxyethylthiazole kinase (265 aa).

Methionine 50 lines the substrate pocket. ATP-binding residues include arginine 125 and threonine 171. Position 198 (glycine 198) interacts with substrate.

The protein belongs to the Thz kinase family. Mg(2+) is required as a cofactor.

The enzyme catalyses 5-(2-hydroxyethyl)-4-methylthiazole + ATP = 4-methyl-5-(2-phosphooxyethyl)-thiazole + ADP + H(+). It participates in cofactor biosynthesis; thiamine diphosphate biosynthesis; 4-methyl-5-(2-phosphoethyl)-thiazole from 5-(2-hydroxyethyl)-4-methylthiazole: step 1/1. Functionally, catalyzes the phosphorylation of the hydroxyl group of 4-methyl-5-beta-hydroxyethylthiazole (THZ). The chain is Hydroxyethylthiazole kinase from Salmonella agona (strain SL483).